A 200-amino-acid polypeptide reads, in one-letter code: MAEQEEKQTRRATAARKTQETDITISISLDGTGSSSIESGIGFLDHMLTSFSRHSGIDITLQCQGDLVVDDHHTVEDIAIVLGGAITEALGEKRGIRRYGWAMIPMDEALARCAVDLGGRSCSVFRAEFSRPLIEGLSTEMVEHFFTSLAGSMNANIHIAILEGRNTHHKIEAIFKAFAYAMKDAIKVEGNAVPSTKGVF.

The protein belongs to the imidazoleglycerol-phosphate dehydratase family.

It is found in the cytoplasm. The enzyme catalyses D-erythro-1-(imidazol-4-yl)glycerol 3-phosphate = 3-(imidazol-4-yl)-2-oxopropyl phosphate + H2O. It functions in the pathway amino-acid biosynthesis; L-histidine biosynthesis; L-histidine from 5-phospho-alpha-D-ribose 1-diphosphate: step 6/9. This is Imidazoleglycerol-phosphate dehydratase from Chlorobium phaeovibrioides (strain DSM 265 / 1930) (Prosthecochloris vibrioformis (strain DSM 265)).